The primary structure comprises 84 residues: Putative defensin-like protein 63 (84 aa).

The N-terminal stretch at 1 to 21 (MDIRKTYVIIFFVGILTISFS) is a signal peptide. 4 disulfides stabilise this stretch: Cys-40–Cys-81, Cys-44–Cys-67, Cys-53–Cys-79, and Cys-57–Cys-80.

This sequence belongs to the DEFL family.

It is found in the secreted. The chain is Putative defensin-like protein 63 from Arabidopsis thaliana (Mouse-ear cress).